A 260-amino-acid chain; its full sequence is Ribosomal RNA small subunit methyltransferase G (260 aa).

S-adenosyl-L-methionine is bound by residues Gly94, Phe99, Asp117 to Ser119, Ala145 to Glu146, and Arg164.

It belongs to the methyltransferase superfamily. RNA methyltransferase RsmG family.

Its subcellular location is the cytoplasm. Its function is as follows. Specifically methylates the N7 position of a guanine in 16S rRNA. The sequence is that of Ribosomal RNA small subunit methyltransferase G from Synechococcus sp. (strain JA-3-3Ab) (Cyanobacteria bacterium Yellowstone A-Prime).